The following is a 72-amino-acid chain: Translation initiation factor IF-1 (72 aa).

The S1-like domain maps to 1-72; the sequence is MAKEELLEFP…TKGRINYRFK (72 aa).

This sequence belongs to the IF-1 family. Component of the 30S ribosomal translation pre-initiation complex which assembles on the 30S ribosome in the order IF-2 and IF-3, IF-1 and N-formylmethionyl-tRNA(fMet); mRNA recruitment can occur at any time during PIC assembly.

The protein resides in the cytoplasm. Its function is as follows. One of the essential components for the initiation of protein synthesis. Stabilizes the binding of IF-2 and IF-3 on the 30S subunit to which N-formylmethionyl-tRNA(fMet) subsequently binds. Helps modulate mRNA selection, yielding the 30S pre-initiation complex (PIC). Upon addition of the 50S ribosomal subunit IF-1, IF-2 and IF-3 are released leaving the mature 70S translation initiation complex. The protein is Translation initiation factor IF-1 of Dinoroseobacter shibae (strain DSM 16493 / NCIMB 14021 / DFL 12).